Reading from the N-terminus, the 204-residue chain is Casparian strip membrane protein 2 (204 aa).

At 1–41 (MKNESTFIDVPADSSSAMKGKAPLIGVAKDHTASGSGGYNR) the chain is on the cytoplasmic side. A helical membrane pass occupies residues 42–62 (GLSIFDFLLRLAAIVAASVAA). Residues 63-92 (GTMFTSDETLPFFTQFLQFEAGYDDLPTFQ) lie on the Extracellular side of the membrane. Residues 93-113 (FFVIAMSLVSGYIVLSLPISV) form a helical membrane-spanning segment. The Cytoplasmic portion of the chain corresponds to 114-125 (VTIVRPLAAAPR). A helical membrane pass occupies residues 126–146 (LLLLVLDTAVMGLTMAAASSA). The Extracellular segment spans residues 147-178 (AAISYVAHNGNQNTNWLPICQQFFDFCQKTSG). A helical transmembrane segment spans residues 179–199 (AVVSSFVAVVFFMILVVLSGV). The Cytoplasmic portion of the chain corresponds to 200–204 (ALERH).

It belongs to the Casparian strip membrane proteins (CASP) family. Homodimer and heterodimers.

It is found in the cell membrane. In terms of biological role, regulates membrane-cell wall junctions and localized cell wall deposition. Required for establishment of the Casparian strip membrane domain (CSD) and the subsequent formation of Casparian strips, a cell wall modification of the root endodermis that determines an apoplastic barrier between the intraorganismal apoplasm and the extraorganismal apoplasm and prevents lateral diffusion. The polypeptide is Casparian strip membrane protein 2 (Raphanus sativus (Radish)).